Reading from the N-terminus, the 247-residue chain is Phosphoribosylaminoimidazole-succinocarboxamide synthase (247 aa).

It belongs to the SAICAR synthetase family.

It carries out the reaction 5-amino-1-(5-phospho-D-ribosyl)imidazole-4-carboxylate + L-aspartate + ATP = (2S)-2-[5-amino-1-(5-phospho-beta-D-ribosyl)imidazole-4-carboxamido]succinate + ADP + phosphate + 2 H(+). It participates in purine metabolism; IMP biosynthesis via de novo pathway; 5-amino-1-(5-phospho-D-ribosyl)imidazole-4-carboxamide from 5-amino-1-(5-phospho-D-ribosyl)imidazole-4-carboxylate: step 1/2. This chain is Phosphoribosylaminoimidazole-succinocarboxamide synthase, found in Synechococcus sp. (strain JA-2-3B'a(2-13)) (Cyanobacteria bacterium Yellowstone B-Prime).